Consider the following 332-residue polypeptide: NADH-quinone oxidoreductase subunit H (332 aa).

Transmembrane regions (helical) follow at residues 4–24 (FAFF…IFAS), 44–64 (IGPD…MIKL), 78–98 (FIFA…LAAI), 120–140 (VALL…FLGG), 165–185 (VGAL…LVDI), 194–214 (FSWL…ALFI), 255–275 (IAGA…FWII), 279–299 (IMMI…RAAF), and 312–332 (YLIL…TVLL).

Belongs to the complex I subunit 1 family. NDH-1 is composed of 14 different subunits. Subunits NuoA, H, J, K, L, M, N constitute the membrane sector of the complex.

It is found in the cell inner membrane. The enzyme catalyses a quinone + NADH + 5 H(+)(in) = a quinol + NAD(+) + 4 H(+)(out). In terms of biological role, NDH-1 shuttles electrons from NADH, via FMN and iron-sulfur (Fe-S) centers, to quinones in the respiratory chain. The immediate electron acceptor for the enzyme in this species is believed to be ubiquinone. Couples the redox reaction to proton translocation (for every two electrons transferred, four hydrogen ions are translocated across the cytoplasmic membrane), and thus conserves the redox energy in a proton gradient. This subunit may bind ubiquinone. This is NADH-quinone oxidoreductase subunit H from Campylobacter jejuni subsp. jejuni serotype O:2 (strain ATCC 700819 / NCTC 11168).